Consider the following 310-residue polypeptide: tRNA dimethylallyltransferase (310 aa).

ATP is bound at residue 14–21 (GPTASGKT). Substrate is bound at residue 16 to 21 (TASGKT). Interaction with substrate tRNA regions lie at residues 39 to 42 (DSAL), 163 to 167 (QRLSR), and 244 to 249 (RCVGYR).

Belongs to the IPP transferase family. In terms of assembly, monomer. The cofactor is Mg(2+).

The enzyme catalyses adenosine(37) in tRNA + dimethylallyl diphosphate = N(6)-dimethylallyladenosine(37) in tRNA + diphosphate. Its function is as follows. Catalyzes the transfer of a dimethylallyl group onto the adenine at position 37 in tRNAs that read codons beginning with uridine, leading to the formation of N6-(dimethylallyl)adenosine (i(6)A). The polypeptide is tRNA dimethylallyltransferase (Aeromonas salmonicida (strain A449)).